Here is a 202-residue protein sequence, read N- to C-terminus: Dephospho-CoA kinase (202 aa).

The DPCK domain occupies 6–202; it reads KISVTGDPSS…QCFKALKGTI (197 aa). ATP is bound at residue 14 to 19; that stretch reads SSGKTE.

It belongs to the CoaE family.

It is found in the cytoplasm. It carries out the reaction 3'-dephospho-CoA + ATP = ADP + CoA + H(+). It participates in cofactor biosynthesis; coenzyme A biosynthesis; CoA from (R)-pantothenate: step 5/5. Functionally, catalyzes the phosphorylation of the 3'-hydroxyl group of dephosphocoenzyme A to form coenzyme A. This Chlamydia trachomatis serovar D (strain ATCC VR-885 / DSM 19411 / UW-3/Cx) protein is Dephospho-CoA kinase.